Consider the following 426-residue polypeptide: MVVDKIQAIRGMNDVLPDSTSVWRFIEQTFINCLVRYGYKEIRFPIVENTQLFKRTIGEITDIVEKEMYTFNDLNGDSITLRPEGTAGCVRACIEHGLLHNQQQKLWYLGPMFRHERPQKGRYRQFNQFGVEALGITGTAIELELISICRRLWTDLGFSQSVQLQVNSLGEINERQKYRSILVEYLHDHFHILDEDSKRRLDKNPLRVLDSKNPDLQHLIQNAPKLIDVLGDDSREHFQSFCNGLETLGIPYSINPVLVRGLDYYGQTVFEWVTDQLGSQATICAGGRYDMLVEFLGGAPTPAVGFALGLERIFLLMETLNLLNESNNKQSIFIIATNEEAILKALVMAESIRNAHPSLDVITNTAGGGFKSQFKKADKSGARMALILGEDEIAREYVSIKDLRTEIEQISIPMTKINEFLQNYLA.

The protein belongs to the class-II aminoacyl-tRNA synthetase family. Homodimer.

The protein resides in the cytoplasm. It carries out the reaction tRNA(His) + L-histidine + ATP = L-histidyl-tRNA(His) + AMP + diphosphate + H(+). This chain is Histidine--tRNA ligase, found in Legionella pneumophila (strain Paris).